A 753-amino-acid polypeptide reads, in one-letter code: 5-methyltetrahydropteroyltriglutamate--homocysteine methyltransferase (753 aa).

5-methyltetrahydropteroyltri-L-glutamate contacts are provided by residues 17-20 and Lys117; that span reads RELK. L-homocysteine-binding positions include 431–433 and Glu484; that span reads IGS. L-methionine contacts are provided by residues 431-433 and Glu484; that span reads IGS. 5-methyltetrahydropteroyltri-L-glutamate is bound by residues 515-516 and Trp561; that span reads RC. Asp599 lines the L-homocysteine pocket. Asp599 is an L-methionine binding site. Glu605 contacts 5-methyltetrahydropteroyltri-L-glutamate. Zn(2+)-binding residues include His641, Cys643, and Glu665. The Proton donor role is filled by His694. Cys726 provides a ligand contact to Zn(2+).

This sequence belongs to the vitamin-B12 independent methionine synthase family. Requires Zn(2+) as cofactor.

It carries out the reaction 5-methyltetrahydropteroyltri-L-glutamate + L-homocysteine = tetrahydropteroyltri-L-glutamate + L-methionine. It participates in amino-acid biosynthesis; L-methionine biosynthesis via de novo pathway; L-methionine from L-homocysteine (MetE route): step 1/1. Functionally, catalyzes the transfer of a methyl group from 5-methyltetrahydrofolate to homocysteine resulting in methionine formation. In Escherichia coli O6:H1 (strain CFT073 / ATCC 700928 / UPEC), this protein is 5-methyltetrahydropteroyltriglutamate--homocysteine methyltransferase.